Consider the following 529-residue polypeptide: MKISYFFVASLSYVSVARASQSFEERCTDFRDSINSLPNVQATIVEYVAGSQNVSLPDNDPSCNQSSQFVTADICRAAMVVKTSNSSQIVMEAWFPRNYTGRFLATGNGGFGGCIRYPELDYTTRLGFAAVATNNGHNGTSAEAFLNSPEVLRDFADRSIHTAAKVGKELTKRFYAEGFRKSYYLGCSTGGRQGFKSVQQYPHDFDGVVAGAPAVHEVNLISWAGHIYEITGNKSEETYLPPALWNIVHSEVMRQCDGLDGAQDNLIEDPDLCHPTFENIMCPSDNKSNNGSLSCITEAQANTVIQLMSPYYNTDGSMLFPGMQPGSETVSSALLYTGVPTPYAKEWFRYVVYNDTNWDPTTFNIKDAQAALKQNPFNIQTWEGDLSRFQNAGGKIITYHGMQDFLVSSFNSREYYKHVHETMGLAPDQLDEFYRYFRISGMAHCYYGDGASYIGGSAPSAYSDDPEDNVLMAMVEWVEKGIAPEFIRGTKLDQDGHPQYTRKHCRYPRRNVYRGPGSYLDENAWECVL.

The N-terminal stretch at 1–19 is a signal peptide; sequence MKISYFFVASLSYVSVARA. 2 disulfide bridges follow: Cys27–Cys75 and Cys63–Cys114. N-linked (GlcNAc...) asparagine glycosylation is found at Asn53, Asn64, Asn85, Asn98, and Asn138. Cystine bridges form between Cys187/Cys445, Cys256/Cys273, Cys282/Cys295, and Cys505/Cys527. Ser188 (acyl-ester intermediate) is an active-site residue. Asn233 carries N-linked (GlcNAc...) asparagine glycosylation. Asp257, Asp260, Ala262, Asp264, and Leu266 together coordinate Ca(2+). Asn286, Asn290, and Asn354 each carry an N-linked (GlcNAc...) asparagine glycan. Active-site charge relay system residues include Asp404 and His444.

This sequence belongs to the tannase family.

Its subcellular location is the secreted. It carries out the reaction feruloyl-polysaccharide + H2O = ferulate + polysaccharide.. Involved in degradation of plant cell walls. Hydrolyzes the feruloyl-arabinose ester bond in arabinoxylans as well as the feruloyl-galactose and feruloyl-arabinose ester bonds in pectin. The sequence is that of Probable feruloyl esterase B-1 (faeB-1) from Aspergillus terreus (strain NIH 2624 / FGSC A1156).